Consider the following 107-residue polypeptide: uncharacterized protein (107 aa).

A disordered region spans residues 86–107; that stretch reads KRAETARLPAATPQKRTGPARG.

This is an uncharacterized protein from Saccharomyces cerevisiae (strain ATCC 204508 / S288c) (Baker's yeast).